The following is a 481-amino-acid chain: Phospho-2-dehydro-3-deoxyheptonate aldolase (481 aa).

The tract at residues M1–I22 is disordered.

This sequence belongs to the class-II DAHP synthase family. In terms of assembly, homodimer. The N-terminus is blocked.

The enzyme catalyses D-erythrose 4-phosphate + phosphoenolpyruvate + H2O = 7-phospho-2-dehydro-3-deoxy-D-arabino-heptonate + phosphate. It functions in the pathway metabolic intermediate biosynthesis; chorismate biosynthesis; chorismate from D-erythrose 4-phosphate and phosphoenolpyruvate: step 1/7. This is Phospho-2-dehydro-3-deoxyheptonate aldolase (aro-8) from Neurospora crassa (strain ATCC 24698 / 74-OR23-1A / CBS 708.71 / DSM 1257 / FGSC 987).